Here is a 173-residue protein sequence, read N- to C-terminus: DELTA-actitoxin-Oor1b (173 aa).

The tract at residues 6-25 is N-terminal region; sequence GAALGFNVHQTVLKALGQVS. Positions 49, 82, 100, 102, 128, and 133 each coordinate phosphocholine. The interval 100–115 is trp-rich region, which is important for the binding to lipid membrane; it reads SVPFDYNLYSNWWDVK.

Belongs to the actinoporin family. Sea anemone subfamily. Octamer or nonamer in membranes. Monomer in the soluble state.

Its subcellular location is the secreted. It localises to the nematocyst. The protein localises to the target cell membrane. Pore-forming protein that forms cations-selective hydrophilic pores of around 1 nm and causes cardiac stimulation and cytolysis. Pore formation is a multi-step process that involves specific recognition of membrane sphingomyelin (but neither cholesterol nor phosphatidylcholine) using aromatic rich region and adjacent phosphocholine (POC) binding site, firm binding to the membrane (mainly driven by hydrophobic interactions) accompanied by the transfer of the N-terminal region to the lipid-water interface and finally pore formation after oligomerization of monomers. Cytolytic effects include red blood cells hemolysis, platelet aggregation and lysis, cytotoxic and cytostatic effects on fibroblasts. Lethality in mammals has been ascribed to severe vasospasm of coronary vessels, cardiac arrhythmia, and inotropic effects. This is DELTA-actitoxin-Oor1b from Oulactis orientalis (Japan anemone).